A 21-amino-acid chain; its full sequence is Dahlein-5.4 (21 aa).

Expressed by the skin dorsal glands.

It localises to the secreted. Its function is as follows. Has no antimicrobial activity. Strongly inhibits the formation of NO by neuronal nitric oxide synthase at micromolar concentrations. The sequence is that of Dahlein-5.4 from Ranoidea dahlii (Dahl's aquatic frog).